Reading from the N-terminus, the 459-residue chain is VGFKAGVKDYKLTYYTPDYETKDTDILAAFRVTPQPGVPPEEAGAAVAAESSTGTWTTVWTDGLTSLDRYKGRCYHIEPVAGEESQFIAYVAYPLDLFEEGSVTNMFTSIVGNVFGFKALRALRLEDLRIPTAYVKTFQGPPHGIQVERDKLNKYGRPLLGCTIKPKLGLSAKNYGRAVYECLRGGLDFTKDDENVNSQPFMRWRDRFLFCAEAIYKAQAETGEIKGHYLNATAGTCEDMMKRAVFARELGVPIVMHDYLTGGFTANTSLAHYCRDNGLLLHIHRAMHAVIDRQKNHGMHFRVLAKALRMSGGDHIHAGTVVGKLEGEREITLGFVDLLRDDFVEKDRSRGIYFTQDWVSMPGVLPVASGGIHVWHMPALTEIFGDDSVLQFGGGTLGHPWGNAPGAVANRVALEACVQARNEGRDLAREGNEIIREASKWSPELAAACEVWKEIKFEF.

At lysine 4 the chain carries N6,N6,N6-trimethyllysine. Residues asparagine 113 and threonine 163 each contribute to the substrate site. Lysine 165 acts as the Proton acceptor in catalysis. Lysine 167 contacts substrate. 3 residues coordinate Mg(2+): lysine 191, aspartate 193, and glutamate 194. An N6-carboxylysine modification is found at lysine 191. The active-site Proton acceptor is histidine 284. Residues arginine 285, histidine 317, and serine 369 each coordinate substrate.

It belongs to the RuBisCO large chain family. Type I subfamily. As to quaternary structure, heterohexadecamer of 8 large chains and 8 small chains; disulfide-linked. The disulfide link is formed within the large subunit homodimers. It depends on Mg(2+) as a cofactor. The disulfide bond which can form in the large chain dimeric partners within the hexadecamer appears to be associated with oxidative stress and protein turnover.

The protein localises to the plastid. The protein resides in the chloroplast. The enzyme catalyses 2 (2R)-3-phosphoglycerate + 2 H(+) = D-ribulose 1,5-bisphosphate + CO2 + H2O. The catalysed reaction is D-ribulose 1,5-bisphosphate + O2 = 2-phosphoglycolate + (2R)-3-phosphoglycerate + 2 H(+). RuBisCO catalyzes two reactions: the carboxylation of D-ribulose 1,5-bisphosphate, the primary event in carbon dioxide fixation, as well as the oxidative fragmentation of the pentose substrate in the photorespiration process. Both reactions occur simultaneously and in competition at the same active site. The protein is Ribulose bisphosphate carboxylase large chain of Morus alba (White mulberry).